A 235-amino-acid polypeptide reads, in one-letter code: Pyridoxine 5'-phosphate synthase (235 aa).

A 3-amino-2-oxopropyl phosphate-binding site is contributed by Asn-6. Residue 8–9 coordinates 1-deoxy-D-xylulose 5-phosphate; sequence DH. Residue Arg-17 coordinates 3-amino-2-oxopropyl phosphate. The active-site Proton acceptor is the His-42. The 1-deoxy-D-xylulose 5-phosphate site is built by Arg-44 and His-49. Residue Glu-69 is the Proton acceptor of the active site. Residue Thr-99 coordinates 1-deoxy-D-xylulose 5-phosphate. Catalysis depends on His-189, which acts as the Proton donor. 3-amino-2-oxopropyl phosphate-binding positions include Gly-190 and 211–212; that span reads GH.

This sequence belongs to the PNP synthase family. In terms of assembly, homooctamer; tetramer of dimers.

It localises to the cytoplasm. It carries out the reaction 3-amino-2-oxopropyl phosphate + 1-deoxy-D-xylulose 5-phosphate = pyridoxine 5'-phosphate + phosphate + 2 H2O + H(+). Its pathway is cofactor biosynthesis; pyridoxine 5'-phosphate biosynthesis; pyridoxine 5'-phosphate from D-erythrose 4-phosphate: step 5/5. Functionally, catalyzes the complicated ring closure reaction between the two acyclic compounds 1-deoxy-D-xylulose-5-phosphate (DXP) and 3-amino-2-oxopropyl phosphate (1-amino-acetone-3-phosphate or AAP) to form pyridoxine 5'-phosphate (PNP) and inorganic phosphate. This is Pyridoxine 5'-phosphate synthase from Chlorobium chlorochromatii (strain CaD3).